The following is a 314-amino-acid chain: Inosine-uridine preferring nucleoside hydrolase (314 aa).

Position 10 (Asp10) interacts with Ca(2+). Asp14 serves as a coordination point for substrate. Asp15 and Thr126 together coordinate Ca(2+). The substrate site is built by Asn160, Glu166, and Asn168. The active-site Proton donor is the His240. A Ca(2+)-binding site is contributed by Asp241.

Belongs to the IUNH family. Homotetramer. Ca(2+) is required as a cofactor.

The enzyme catalyses inosine + H2O = hypoxanthine + D-ribose. The catalysed reaction is uridine + H2O = D-ribose + uracil. It participates in purine metabolism; purine nucleoside salvage. Is potently inhibited by immucillin A and immucillin ACAP, which are transition state inhibitors. Its function is as follows. Catalyzes the hydrolysis of the N-glycosidic bond of all of the commonly occurring purine and pyrimidine nucleosides into ribose and the associated base, but has a preference for inosine and uridine as substrates. Likely functions in purine salvage from the host, a fundamental pathway since protozoan parasites such as L.major are incapable of de novo purine biosynthesis. This chain is Inosine-uridine preferring nucleoside hydrolase (NSNH), found in Leishmania major.